A 254-amino-acid polypeptide reads, in one-letter code: Acetylglutamate kinase (254 aa).

Substrate is bound by residues G40–G41, R62, and N158.

Belongs to the acetylglutamate kinase family. ArgB subfamily.

Its subcellular location is the cytoplasm. It carries out the reaction N-acetyl-L-glutamate + ATP = N-acetyl-L-glutamyl 5-phosphate + ADP. It functions in the pathway amino-acid biosynthesis; L-arginine biosynthesis; N(2)-acetyl-L-ornithine from L-glutamate: step 2/4. Catalyzes the ATP-dependent phosphorylation of N-acetyl-L-glutamate. The chain is Acetylglutamate kinase from Chloroflexus aggregans (strain MD-66 / DSM 9485).